A 209-amino-acid polypeptide reads, in one-letter code: Kynurenine formamidase (209 aa).

Phe-19 serves as a coordination point for substrate. Positions 49, 53, and 55 each coordinate Zn(2+). His-59 functions as the Proton donor/acceptor in the catalytic mechanism. Zn(2+)-binding residues include His-160 and Glu-172.

The protein belongs to the Cyclase 1 superfamily. KynB family. In terms of assembly, homodimer. Zn(2+) serves as cofactor.

It catalyses the reaction N-formyl-L-kynurenine + H2O = L-kynurenine + formate + H(+). It functions in the pathway amino-acid degradation; L-tryptophan degradation via kynurenine pathway; L-kynurenine from L-tryptophan: step 2/2. Catalyzes the hydrolysis of N-formyl-L-kynurenine to L-kynurenine, the second step in the kynurenine pathway of tryptophan degradation. The sequence is that of Kynurenine formamidase from Delftia acidovorans (strain DSM 14801 / SPH-1).